A 479-amino-acid chain; its full sequence is MTAHIGLSAQHVVDSLGHPDGASRPPVSAESLSRASELLQSNHDTWHIFFREATGHNHMAHSILTALALGASPSELERAYTDTEAIQRPIPAVDPMILTRLDADPQALESLLGWSDLYSTFLTYFQSQIDRHGWQSVVTTYVFSETPLAEKLLIKLYEGMYHSLIHLGLGIEFGQPGIIAEALAQAAAHEDGHIDKLLLGVEAAIAAKDDTRTETTVPKSLVQLVDEVRSHPRIWADLRFGDRWNRMRDSIMDRAADELIPIAAQFRIPASGMMMMAGEHADLLTIRTAEMASTAAYLAGASQSARRPRKIDFFLMHTVTASLFFSVFNAQEWIPRAMRVRLVEWKGRLDLAFYAFCKSPELDACVISDYSDDFTRDMDWAALYAAVNQEHDDGHVAKFMRALRHAERLSRPYEQHPVWAEHFPVKGNMWIKLARMALETTRHSPPDFKWIMGTGFDEAWERPDLKLAENRGQQGQSVP.

The disordered stretch occupies residues 14-34 (DSLGHPDGASRPPVSAESLSR).

It belongs to the AflY oxidoreductase family.

Its pathway is secondary metabolite biosynthesis. Its function is as follows. Baeyer-Villiger monooxygenase; part of the gene cluster that mediates the biosynthesis of the tetrahydroxanthone dimer secalonic acid D. The pathway begins with the synthesis of atrochrysone thioester by the polyketide synthase AacuL. The atrochrysone carboxyl ACP thioesterase AacuM then breaks the thioester bond and releases the atrochrysone carboxylic acid from AacuL. Atrochrysone carboxylic acid is decarboxylated by the decarboxylase AacuI, and oxidized by the anthrone oxygenase AacuG to yield emodin. Emodin is then reduced to emodin hydroquinone by a yet unidentified oxidoreductase. A-ring reduction by the short chain dehydrogenase AacuN, dehydration by the scytalone dehydratase-like protein AacuK and probable spontaneous re-oxidation, results in overall deoxygenation to chrysophanol. Baeyer-Villiger oxidation by the Baeyer-Villiger monooxygenase (BVMO) AacuH then yields monodictyphenone. Monodictyphenone is transformed into compounds with the tetrahydroxanthone skeleton via methylesterification by the methyltransferase AacuQ, followed by the action of the flavin-dependent monooxygenase AacuC, the isomerase AacuP, and the short chain dehydrogenase/reductase AacuF or AacuD. AacuF and AacuD should accept the same compound as a substrate but perform the ketoreduction with a different stereoselectivity, thus yielding blennolides B and A, respectively. In the final step of the biosynthesis, the cytochrome P450 monooxygenase AacuE accepts blennolide B and/or blennolide A to conduct the dimerization reaction to furnish the tetrahydroxanthone dimers, secalonic acids D, B, and F. This Aspergillus aculeatus (strain ATCC 16872 / CBS 172.66 / WB 5094) protein is Baeyer-Villiger monooxygenase AacuH.